We begin with the raw amino-acid sequence, 314 residues long: uncharacterized protein (314 aa).

Residues 1 to 29 (MMRLIRTLPLRCFKTRIRRQGSLLCLRCF) constitute a mitochondrion transit peptide. The segment at 52–74 (SSSPLSKNKEKQEKPEKENEGKH) is disordered. Basic and acidic residues predominate over residues 58–74 (KNKEKQEKPEKENEGKH). The stretch at 177–207 (LNEHHLQLLKLKRELNSIHDELNEIIIDLLQ) forms a coiled coil. Residues 262-279 (GLLVILVLVCSIMIGVSA) form a helical membrane-spanning segment. Positions 281 to 314 (KKERPGLQEPEEPEILAPKEDIDTTFPQDQHDID) are disordered.

The protein localises to the mitochondrion membrane. This is an uncharacterized protein from Saccharomyces cerevisiae (strain ATCC 204508 / S288c) (Baker's yeast).